The chain runs to 278 residues: Orotidine 5'-phosphate decarboxylase (278 aa).

The active-site Proton donor is the K95.

This sequence belongs to the OMP decarboxylase family. Type 2 subfamily.

It carries out the reaction orotidine 5'-phosphate + H(+) = UMP + CO2. It participates in pyrimidine metabolism; UMP biosynthesis via de novo pathway; UMP from orotate: step 2/2. The protein is Orotidine 5'-phosphate decarboxylase of Corynebacterium glutamicum (strain ATCC 13032 / DSM 20300 / JCM 1318 / BCRC 11384 / CCUG 27702 / LMG 3730 / NBRC 12168 / NCIMB 10025 / NRRL B-2784 / 534).